The sequence spans 571 residues: Proline--tRNA ligase (571 aa).

The protein belongs to the class-II aminoacyl-tRNA synthetase family. ProS type 1 subfamily. Homodimer.

The protein localises to the cytoplasm. The catalysed reaction is tRNA(Pro) + L-proline + ATP = L-prolyl-tRNA(Pro) + AMP + diphosphate. Functionally, catalyzes the attachment of proline to tRNA(Pro) in a two-step reaction: proline is first activated by ATP to form Pro-AMP and then transferred to the acceptor end of tRNA(Pro). As ProRS can inadvertently accommodate and process non-cognate amino acids such as alanine and cysteine, to avoid such errors it has two additional distinct editing activities against alanine. One activity is designated as 'pretransfer' editing and involves the tRNA(Pro)-independent hydrolysis of activated Ala-AMP. The other activity is designated 'posttransfer' editing and involves deacylation of mischarged Ala-tRNA(Pro). The misacylated Cys-tRNA(Pro) is not edited by ProRS. The chain is Proline--tRNA ligase from Ligilactobacillus salivarius (strain UCC118) (Lactobacillus salivarius).